The chain runs to 512 residues: Solute carrier family 2, facilitated glucose transporter member 7 (512 aa).

The Cytoplasmic portion of the chain corresponds to 1 to 21; it reads MENKEAGTPPPIPSREGRLQP. A helical membrane pass occupies residues 22–42; sequence TLLLATLSAAFGSAFQYGYNL. The Extracellular portion of the chain corresponds to 43–78; it reads SVVNTPHKVFKSFYNETYFERHATFMDGKLMLLLWS. Residue N57 is glycosylated (N-linked (GlcNAc...) asparagine). A helical membrane pass occupies residues 79–99; the sequence is CTVSMFPLGGLLGSLLVGLLV. Topologically, residues 100 to 107 are cytoplasmic; the sequence is DSCGRKGT. The helical transmembrane segment at 108–128 threads the bilayer; sequence LLINNIFAIIPAILMGVSKVA. The Extracellular portion of the chain corresponds to 129-138; it reads KAFELIVFSR. A helical transmembrane segment spans residues 139 to 159; it reads VVLGVCAGISYSALPMYLGEL. Residues 160–172 lie on the Cytoplasmic side of the membrane; sequence APKNLRGMVGTMT. Residues 173–193 traverse the membrane as a helical segment; that stretch reads EVFVIVGVFLAQIFSLQAILG. The Extracellular portion of the chain corresponds to 194-198; it reads NPAGW. Residues 199–219 traverse the membrane as a helical segment; it reads PVLLALTGVPALLQLLTLPFF. At 220 to 281 the chain is on the cytoplasmic side; the sequence is PESPRYSLIQ…LHLCALRSLR (62 aa). A helical transmembrane segment spans residues 282–302; the sequence is WQLLSIIVLMAGQQLSGINAI. Residues 294 to 295 and N300 contribute to the D-glucose site; that span reads QQ. The Extracellular portion of the chain corresponds to 303–321; it reads NYYADTIYTSAGVEAAHSQ. The chain crosses the membrane as a helical span at residues 322 to 342; the sequence is YVTVGSGVVNIVMTITSAVLV. N331 contacts D-glucose. Residues 343 to 350 are Cytoplasmic-facing; the sequence is ERLGRRHL. The chain crosses the membrane as a helical span at residues 351–371; the sequence is LLAGYGICGSACLVLTVVLLF. At 372–379 the chain is on the extracellular side; the sequence is QNRVPELS. The chain crosses the membrane as a helical span at residues 380–400; the sequence is YLGIICVFAYIAGHSIGPSPV. Over 401–415 the chain is Cytoplasmic; that stretch reads PSVVRTEIFLQSSRR. The helical transmembrane segment at 416-436 threads the bilayer; that stretch reads AAFMVDGAVHWLTNFIIGFLF. The Extracellular segment spans residues 437–445; it reads PSIQEAIGA. Residues 446-466 form a helical membrane-spanning segment; that stretch reads YSFIIFAGICLLTAIYIYVVI. Residues 467 to 512 are Cytoplasmic-facing; sequence PETKGKTFVEINRIFAKRNRVKLPEEKEETIDAGPPTASPAKETSF. Positions 491-512 are disordered; sequence EEKEETIDAGPPTASPAKETSF.

Belongs to the major facilitator superfamily. Sugar transporter (TC 2.A.1.1) family. Glucose transporter subfamily. Expressed in small intestine and colon. Weakly expressed in testis and prostate.

The protein localises to the cell membrane. It localises to the apical cell membrane. The enzyme catalyses D-glucose(out) = D-glucose(in). It carries out the reaction D-fructose(out) = D-fructose(in). With respect to regulation, glucose and fructose transport are inhibited by the flavonoid apigenin. Functionally, probable sugar transporter. Even if its physiological substrate is subject to discussion, it is able to transport glucose and fructose. Does not transport galactose, 2-deoxy-d-glucose and xylose. The sequence is that of Solute carrier family 2, facilitated glucose transporter member 7 from Homo sapiens (Human).